The chain runs to 462 residues: Ribosomal protein uS12 methylthiotransferase RimO (462 aa).

Positions 10-125 (PRIGMVSLGC…VLDAVHRNLP (116 aa)) constitute an MTTase N-terminal domain. The [4Fe-4S] cluster site is built by cysteine 19, cysteine 55, cysteine 84, cysteine 160, cysteine 164, and cysteine 167. One can recognise a Radical SAM core domain in the interval 146-388 (LTPRHYAYLK…AVAEALSSAK (243 aa)). Residues 390-462 (QRRVGATMQV…RGHDLLAQPI (73 aa)) enclose the TRAM domain.

This sequence belongs to the methylthiotransferase family. RimO subfamily. [4Fe-4S] cluster is required as a cofactor.

It localises to the cytoplasm. It carries out the reaction L-aspartate(89)-[ribosomal protein uS12]-hydrogen + (sulfur carrier)-SH + AH2 + 2 S-adenosyl-L-methionine = 3-methylsulfanyl-L-aspartate(89)-[ribosomal protein uS12]-hydrogen + (sulfur carrier)-H + 5'-deoxyadenosine + L-methionine + A + S-adenosyl-L-homocysteine + 2 H(+). Its function is as follows. Catalyzes the methylthiolation of an aspartic acid residue of ribosomal protein uS12. The chain is Ribosomal protein uS12 methylthiotransferase RimO from Verminephrobacter eiseniae (strain EF01-2).